Reading from the N-terminus, the 284-residue chain is L-ribulose-5-phosphate 3-epimerase UlaE (284 aa).

Belongs to the L-ribulose-5-phosphate 3-epimerase family.

The enzyme catalyses L-ribulose 5-phosphate = L-xylulose 5-phosphate. It participates in cofactor degradation; L-ascorbate degradation; D-xylulose 5-phosphate from L-ascorbate: step 3/4. Catalyzes the isomerization of L-xylulose-5-phosphate to L-ribulose-5-phosphate. Is involved in the anaerobic L-ascorbate utilization. The polypeptide is L-ribulose-5-phosphate 3-epimerase UlaE (Escherichia coli O157:H7 (strain EC4115 / EHEC)).